The sequence spans 460 residues: ATP synthase subunit beta (460 aa).

149 to 156 (GGAGVGKT) lines the ATP pocket.

It belongs to the ATPase alpha/beta chains family. As to quaternary structure, F-type ATPases have 2 components, CF(1) - the catalytic core - and CF(0) - the membrane proton channel. CF(1) has five subunits: alpha(3), beta(3), gamma(1), delta(1), epsilon(1). CF(0) has three main subunits: a(1), b(2) and c(9-12). The alpha and beta chains form an alternating ring which encloses part of the gamma chain. CF(1) is attached to CF(0) by a central stalk formed by the gamma and epsilon chains, while a peripheral stalk is formed by the delta and b chains.

The protein resides in the cell inner membrane. The catalysed reaction is ATP + H2O + 4 H(+)(in) = ADP + phosphate + 5 H(+)(out). Produces ATP from ADP in the presence of a proton gradient across the membrane. The catalytic sites are hosted primarily by the beta subunits. The sequence is that of ATP synthase subunit beta from Nitrosomonas europaea (strain ATCC 19718 / CIP 103999 / KCTC 2705 / NBRC 14298).